The primary structure comprises 210 residues: Large ribosomal subunit protein bL25 (210 aa).

Positions 175–210 (IATILPPQQEEEIDSGEQQEAGQPDAAEGRETTPEE) are disordered. Residues 201–210 (AEGRETTPEE) are compositionally biased toward basic and acidic residues.

The protein belongs to the bacterial ribosomal protein bL25 family. CTC subfamily. Part of the 50S ribosomal subunit; part of the 5S rRNA/L5/L18/L25 subcomplex. Contacts the 5S rRNA. Binds to the 5S rRNA independently of L5 and L18.

This is one of the proteins that binds to the 5S RNA in the ribosome where it forms part of the central protuberance. This chain is Large ribosomal subunit protein bL25, found in Geobacillus kaustophilus (strain HTA426).